Consider the following 191-residue polypeptide: Elongation factor P-like protein (191 aa).

Belongs to the elongation factor P family.

The chain is Elongation factor P-like protein from Shewanella sediminis (strain HAW-EB3).